A 186-amino-acid polypeptide reads, in one-letter code: Superoxide dismutase [Cu-Zn] (186 aa).

Positions 1–22 (MNMKTLLALAVSAVCSVSVAQA) are cleaved as a signal peptide. Residues histidine 79, histidine 81, and histidine 104 each coordinate Cu cation. An intrachain disulfide couples cysteine 86 to cysteine 182. Zn(2+) is bound by residues histidine 104, histidine 113, histidine 122, and aspartate 125. Histidine 160 provides a ligand contact to Cu cation.

The protein belongs to the Cu-Zn superoxide dismutase family. Homodimer. It depends on Cu cation as a cofactor. The cofactor is Zn(2+).

Its subcellular location is the periplasm. It carries out the reaction 2 superoxide + 2 H(+) = H2O2 + O2. Its function is as follows. Destroys radicals which are normally produced within the cells and which are toxic to biological systems. This is Superoxide dismutase [Cu-Zn] (sodC) from Neisseria meningitidis serogroup A / serotype 4A (strain DSM 15465 / Z2491).